Reading from the N-terminus, the 945-residue chain is Protein translocase subunit SecA (945 aa).

ATP contacts are provided by residues glutamine 90, 108–112 (GEGKT), and aspartate 509. A disordered region spans residues 533–568 (VKPEDGHKPPVPLQRRSESSGFGEDKDVTTDNSKPL). The span at 547–561 (RRSESSGFGEDKDVT) shows a compositional bias: basic and acidic residues.

It belongs to the SecA family. In terms of assembly, monomer and homodimer. Part of the essential Sec protein translocation apparatus which comprises SecA, SecYEG and auxiliary proteins SecDF. Other proteins may also be involved.

The protein localises to the cell inner membrane. It localises to the cellular thylakoid membrane. It is found in the cytoplasm. It carries out the reaction ATP + H2O + cellular proteinSide 1 = ADP + phosphate + cellular proteinSide 2.. In terms of biological role, part of the Sec protein translocase complex. Interacts with the SecYEG preprotein conducting channel. Has a central role in coupling the hydrolysis of ATP to the transfer of proteins into and across the cell membrane, serving as an ATP-driven molecular motor driving the stepwise translocation of polypeptide chains across the membrane. Its function is as follows. Probably participates in protein translocation into and across both the cytoplasmic and thylakoid membranes in cyanobacterial cells. The chain is Protein translocase subunit SecA from Prochlorococcus marinus (strain MIT 9211).